The primary structure comprises 351 residues: Probable minor fimbrial subunit LpfD (351 aa).

The N-terminal stretch at methionine 1 to alanine 22 is a signal peptide.

Belongs to the fimbrial protein family.

Its subcellular location is the fimbrium. Its function is as follows. Part of the lpfABCC'DE fimbrial operon. LP fimbriae may participate in the interaction with eukaryotic cells by assisting in microcolony formation. This is Probable minor fimbrial subunit LpfD (lpfD) from Escherichia coli O157:H7.